The chain runs to 247 residues: Small ribosomal subunit protein uS2 (247 aa).

It belongs to the universal ribosomal protein uS2 family.

In Ralstonia pickettii (strain 12J), this protein is Small ribosomal subunit protein uS2.